The chain runs to 285 residues: Phosphatase YwpJ (285 aa).

Catalysis depends on Asp-7, which acts as the Nucleophile. Asp-7 contributes to the Mg(2+) binding site. Residue Leu-8 participates in phosphate binding. Asp-9 contacts Mg(2+). Phosphate is bound by residues Thr-41–Gly-42 and Lys-214. Mg(2+) contacts are provided by Asp-237 and Ser-238. Residues Asn-240 and Lys-282–His-283 contribute to the phosphate site.

It belongs to the HAD-like hydrolase superfamily. Cof family. Mg(2+) is required as a cofactor.

Functionally, catalyzes the dephosphorylation of phosphorylated 5-6 carbon sugars and monophosphate nucleotides (NMP) in vitro. To a lesser extent, dephosphorylates flavin mononucleotide (FMN) in vitro. The polypeptide is Phosphatase YwpJ (ywpJ) (Bacillus subtilis (strain 168)).